The primary structure comprises 208 residues: 3-demethoxyubiquinol 3-hydroxylase (208 aa).

Fe cation contacts are provided by E57, E87, H90, E139, E171, and H174.

The protein belongs to the COQ7 family. The cofactor is Fe cation.

The protein localises to the cell membrane. The catalysed reaction is a 5-methoxy-2-methyl-3-(all-trans-polyprenyl)benzene-1,4-diol + AH2 + O2 = a 3-demethylubiquinol + A + H2O. Its pathway is cofactor biosynthesis; ubiquinone biosynthesis. Its function is as follows. Catalyzes the hydroxylation of 2-nonaprenyl-3-methyl-6-methoxy-1,4-benzoquinol during ubiquinone biosynthesis. In Burkholderia lata (strain ATCC 17760 / DSM 23089 / LMG 22485 / NCIMB 9086 / R18194 / 383), this protein is 3-demethoxyubiquinol 3-hydroxylase.